We begin with the raw amino-acid sequence, 169 residues long: uncharacterized protein (169 aa).

Residues 35–163 form the Nudix hydrolase domain; sequence LIGRGTFILL…PYCPDSLQAL (129 aa). A Nudix box motif is present at residues 81-103; the sequence is YADSAARELEEELGIRDAVLREH. Glu88 and Glu92 together coordinate Mg(2+).

It belongs to the Nudix hydrolase family. The cofactor is Mg(2+).

This is an uncharacterized protein from Pseudomonas aeruginosa (strain ATCC 15692 / DSM 22644 / CIP 104116 / JCM 14847 / LMG 12228 / 1C / PRS 101 / PAO1).